The sequence spans 318 residues: dTDP-6-deoxy-L-talose 4-dehydrogenase (NAD(P)(+)) (318 aa).

Residues 19–20, 60–61, asparagine 95, threonine 120, tyrosine 145, and lysine 149 each bind NAD(+); these read FI and DP. The substrate site is built by threonine 120 and tyrosine 145. Tyrosine 145 serves as the catalytic Proton acceptor.

It belongs to the NAD(P)-dependent epimerase/dehydratase family.

The enzyme catalyses dTDP-6-deoxy-beta-L-talose + NAD(+) = dTDP-4-dehydro-beta-L-rhamnose + NADH + H(+). It carries out the reaction dTDP-6-deoxy-beta-L-talose + NADP(+) = dTDP-4-dehydro-beta-L-rhamnose + NADPH + H(+). Functionally, catalyzes the reduction of dTDP-6-deoxy-L-lyxo-4-hexulose to dTDP-6-deoxy-L-talose. Can use NAD(+) or NADP(+). The sequence is that of dTDP-6-deoxy-L-talose 4-dehydrogenase (NAD(P)(+)) (tal) from Kitasatospora kifunensis (Streptomyces kifunensis).